A 268-amino-acid chain; its full sequence is tRNA pseudouridine synthase A (268 aa).

The active-site Nucleophile is Asp-52. Tyr-110 provides a ligand contact to substrate.

Belongs to the tRNA pseudouridine synthase TruA family. As to quaternary structure, homodimer.

It catalyses the reaction uridine(38/39/40) in tRNA = pseudouridine(38/39/40) in tRNA. Formation of pseudouridine at positions 38, 39 and 40 in the anticodon stem and loop of transfer RNAs. This is tRNA pseudouridine synthase A from Prochlorococcus marinus (strain MIT 9301).